A 289-amino-acid polypeptide reads, in one-letter code: Protease HtpX (289 aa).

2 helical membrane passes run 5-25 (IVLF…VMSL) and 33-53 (MSGL…ISLL). His-140 contributes to the Zn(2+) binding site. Glu-141 is a catalytic residue. His-144 contributes to the Zn(2+) binding site. 2 helical membrane passes run 155–175 (LLQG…GGFI) and 193–213 (GIVL…TMWF). Glu-218 is a binding site for Zn(2+).

This sequence belongs to the peptidase M48B family. Requires Zn(2+) as cofactor.

It is found in the cell inner membrane. The polypeptide is Protease HtpX (Xylella fastidiosa (strain M12)).